We begin with the raw amino-acid sequence, 352 residues long: MKDKVRVAVVGGSGYTGGELLRILVTHPKTEISVITSREYAGKPVSLIHPNLRGLISLNFTNFSIDKISDKADAIFLALPHGVSLNYAPKLLDLGLTVVDLSADFRLKNPELYKIWYNYEHPYPDLLDKAVYGLPELHYEELKNAKLIASPGCNATATILALAPIVATKITDEKKFISDVKVGSSEGGAKPSEGSHHPERQNAIRPYEAEGHRHAAEAEQELSRIAKANISVSIVPHAVSSIRGALASAHTWLTNELEEIEIWKKIAEFYRGKRFIRIIRGNIHPYPDPKFVIGSNFADIGFAVEKRISRLTTFSAIDNLMKGAAGQAVQAFNISMGFNEDDGLKLVPLRPA.

Residue 13–16 participates in NADP(+) binding; that stretch reads SGYT. Cysteine 153 is an active-site residue. Position 319 (asparagine 319) interacts with NADP(+).

The protein belongs to the NAGSA dehydrogenase family. Type 1 subfamily. LysY sub-subfamily.

Its subcellular location is the cytoplasm. The catalysed reaction is [amino-group carrier protein]-C-terminal-N-(1-carboxy-5-oxopentan-1-yl)-L-glutamine + phosphate + NADP(+) = [amino-group carrier protein]-C-terminal-N-(1-carboxy-5-phosphooxy-5-oxopentan-1-yl)-L-glutamine + NADPH + H(+). The enzyme catalyses [amino-group carrier protein]-C-terminal-gamma-(L-glutamyl-5-semialdehyde)-L-glutamate + phosphate + NADP(+) = [amino-group carrier protein]-C-terminal-gamma-(5-phospho-L-glutamyl)-L-glutamate + NADPH + H(+). It functions in the pathway amino-acid biosynthesis; L-lysine biosynthesis via AAA pathway; L-lysine from L-alpha-aminoadipate (Thermus route): step 3/5. Its pathway is amino-acid biosynthesis; L-arginine biosynthesis. Involved in both the arginine and lysine biosynthetic pathways. This Saccharolobus solfataricus (strain ATCC 35092 / DSM 1617 / JCM 11322 / P2) (Sulfolobus solfataricus) protein is [LysW]-L-2-aminoadipate/[LysW]-L-glutamate phosphate reductase.